We begin with the raw amino-acid sequence, 179 residues long: Large ribosomal subunit protein uL6 (179 aa).

Belongs to the universal ribosomal protein uL6 family. In terms of assembly, part of the 50S ribosomal subunit.

In terms of biological role, this protein binds to the 23S rRNA, and is important in its secondary structure. It is located near the subunit interface in the base of the L7/L12 stalk, and near the tRNA binding site of the peptidyltransferase center. This Alkaliphilus metalliredigens (strain QYMF) protein is Large ribosomal subunit protein uL6.